The sequence spans 322 residues: Beta-1,4-galactosyltransferase 7 (322 aa).

Residues Met-1–Trp-9 lie on the Cytoplasmic side of the membrane. Residues Val-10–Leu-30 traverse the membrane as a helical; Signal-anchor for type II membrane protein segment. Residues Gly-31–Thr-322 are Lumenal-facing. Positions 82, 84, 145, and 146 each coordinate UDP-alpha-D-galactose. Asp-147 provides a ligand contact to Mn(2+). UDP-alpha-D-galactose-binding residues include Tyr-177, Gly-185, Trp-207, and Gly-208. Residue Leu-209 participates in beta-D-xylose binding. Position 210 (Glu-210) interacts with UDP-alpha-D-galactose. Positions 211 and 212 each coordinate beta-D-xylose. Asn-236 carries N-linked (GlcNAc...) asparagine glycosylation. Positions 241, 243, and 250 each coordinate UDP-alpha-D-galactose. Residues His-241 and His-243 each coordinate Mn(2+). 2 disulfides stabilise this stretch: Cys-255-Cys-310 and Cys-300-Cys-308.

It belongs to the glycosyltransferase 7 family. Requires Mn(2+) as cofactor. As to expression, expressed in male and female adults. Expressed in head.

The protein resides in the golgi apparatus membrane. It catalyses the reaction 3-O-(beta-D-xylosyl)-L-seryl-[protein] + UDP-alpha-D-galactose = 3-O-(beta-D-galactosyl-(1-&gt;4)-beta-D-xylosyl)-L-seryl-[protein] + UDP + H(+). The protein operates within protein modification; protein glycosylation. Its function is as follows. Transfers galactose from UDP-D-Galactose (UDP-Gal) to the acceptor xylose residue in the linkage tetrasaccharide region of the glycosaminoglycan side chain of proteoglycans. No activity towards beta-GlcNAc, beta-Glc, beta-Gal, and beta-GalNAc as acceptors. The chain is Beta-1,4-galactosyltransferase 7 from Drosophila melanogaster (Fruit fly).